A 419-amino-acid polypeptide reads, in one-letter code: Ubiquitin receptor RAD23c (419 aa).

The region spanning 1-79 (MKIFVKTLKG…IVIMMNKSKP (79 aa)) is the Ubiquitin-like domain. The segment covering 83 to 118 (AASSASAGTSQAKSIPPSTSQPSISPQTPASVSAPV) has biased composition (low complexity). Positions 83-172 (AASSASAGTS…DSAPVGSQGD (90 aa)) are disordered. Residues 119–135 (APAPTRPPPPAPTPTPA) show a composition bias toward pro residues. Low complexity predominate over residues 136 to 146 (PVAATETVTTP). A UBA 1 domain is found at 185 to 228 (SNLESTIQQILDMGGGTWDRETVVLALRAAFNNPERAVEYLYTG). Positions 235–282 (VPPVARPPASAGQPANPPAQTQQPAAAPASGPNANPLDLFPQGLPNVG) are disordered. Residues 245-270 (AGQPANPPAQTQQPAAAPASGPNANP) show a composition bias toward low complexity. In terms of domain architecture, STI1 spans 288 to 331 (GTLDFLRNSQQFQALRAMVQANPQVLQPMLQELGKQNPNLMRLI). One can recognise a UBA 2 domain in the interval 372–413 (THEEREAIERLEAMGFERALVLEVFFACNKNEELAANYLLDH).

This sequence belongs to the RAD23 family. As to quaternary structure, interacts with 'Lys-48'-linked polyubiquitin chains via its both UBA domains. Interacts with RPN10 via its ubiquitin-like domain. In terms of tissue distribution, widely expressed in the whole plant.

It is found in the nucleus. The protein resides in the cytoplasm. Functionally, may be involved in nucleotide excision repair. Binds and presumably selects ubiquitin-conjugates for destruction. Prefers multiubiquitin chains rather than single ubiquitins, with a binding affinity for 'Lys-48'-linked ubiquitin chains. Acts as a ubiquitin receptor that associates with the 26S proteasomal docking subunit RPN10 for the indirect recognition of ubiquitinated substrates of ubiquitin/26S proteasome-mediated proteolysis (UPP). Involved in UV tolerance in hypocotyls, specifically in dark conditions. This Arabidopsis thaliana (Mouse-ear cress) protein is Ubiquitin receptor RAD23c.